A 202-amino-acid polypeptide reads, in one-letter code: LexA repressor (202 aa).

Positions 27 to 47 (RAEIAAELGFRSANAAEEHLR) form a DNA-binding region, H-T-H motif. Active-site for autocatalytic cleavage activity residues include serine 119 and lysine 156.

It belongs to the peptidase S24 family. In terms of assembly, homodimer.

The enzyme catalyses Hydrolysis of Ala-|-Gly bond in repressor LexA.. Functionally, represses a number of genes involved in the response to DNA damage (SOS response), including recA and lexA. In the presence of single-stranded DNA, RecA interacts with LexA causing an autocatalytic cleavage which disrupts the DNA-binding part of LexA, leading to derepression of the SOS regulon and eventually DNA repair. The protein is LexA repressor of Marinobacter nauticus (strain ATCC 700491 / DSM 11845 / VT8) (Marinobacter aquaeolei).